The chain runs to 492 residues: Probable cytochrome P450 310a1 (492 aa).

Residue Cys-428 participates in heme binding.

It belongs to the cytochrome P450 family. It depends on heme as a cofactor.

The protein resides in the endoplasmic reticulum membrane. It is found in the microsome membrane. In terms of biological role, may be involved in the metabolism of insect hormones and in the breakdown of synthetic insecticides. In Drosophila melanogaster (Fruit fly), this protein is Probable cytochrome P450 310a1 (Cyp310a1).